Reading from the N-terminus, the 304-residue chain is MPELALLEEVVEKVRPLLGQGKVADYIPALASVDAGKLGIAVTTVDGETLGAGDYLEPFSIQSISKVFSLTLALTLYEEAEIWSRVGKEPSGHSFNSLVQVELERGKPRNPFINAGALVIADLLQSRLGAPKHRMLELVRQLSQNDKVSFDKQVADSEYQHSARNAAIAYLMKSFGNFQGDVDTVLRTYFHYCALKMNCADLSKAMLYLANRGKSITGTELISQVQTRQLNALLATSGLYDGAGEFAYRVGMPGKSGVGGGIIAVIPGELSICVWSPELDGNGNSLAGTAMLEHLSQRLGRSIF.

Serine 63, asparagine 114, glutamate 158, asparagine 165, tyrosine 189, tyrosine 240, and valine 258 together coordinate substrate.

It belongs to the glutaminase family. Homotetramer.

It carries out the reaction L-glutamine + H2O = L-glutamate + NH4(+). This Shewanella baltica (strain OS195) protein is Glutaminase.